The primary structure comprises 418 residues: Enolase (418 aa).

Q162 lines the (2R)-2-phosphoglycerate pocket. The Proton donor role is filled by E204. 3 residues coordinate Mg(2+): D241, E283, and D309. K334, R363, S364, and K385 together coordinate (2R)-2-phosphoglycerate. The Proton acceptor role is filled by K334.

This sequence belongs to the enolase family. The cofactor is Mg(2+).

It is found in the cytoplasm. The protein localises to the secreted. It localises to the cell surface. The catalysed reaction is (2R)-2-phosphoglycerate = phosphoenolpyruvate + H2O. Its pathway is carbohydrate degradation; glycolysis; pyruvate from D-glyceraldehyde 3-phosphate: step 4/5. Its function is as follows. Catalyzes the reversible conversion of 2-phosphoglycerate (2-PG) into phosphoenolpyruvate (PEP). It is essential for the degradation of carbohydrates via glycolysis. In Pelagibacter ubique (strain HTCC1062), this protein is Enolase.